The following is a 215-amino-acid chain: Cytidylate kinase (215 aa).

Position 10–18 (10–18) interacts with ATP; the sequence is GPAASGKGT.

This sequence belongs to the cytidylate kinase family. Type 1 subfamily.

Its subcellular location is the cytoplasm. The enzyme catalyses CMP + ATP = CDP + ADP. It catalyses the reaction dCMP + ATP = dCDP + ADP. The protein is Cytidylate kinase of Bartonella bacilliformis (strain ATCC 35685 / KC583 / Herrer 020/F12,63).